The following is a 906-amino-acid chain: Protein translocase subunit SecA (906 aa).

ATP-binding positions include glutamine 86, 104–108, and aspartate 499; that span reads GEGKT. The span at 834-847 shows a compositional bias: basic and acidic residues; sequence KLQKNMRESREDPA. Residues 834 to 887 are disordered; sequence KLQKNMRESREDPAFSKYNAGSSLETDLKPVVSRVDPKDRNPDDPTSWGRVSRN. Zn(2+)-binding residues include cysteine 890, cysteine 892, cysteine 901, and histidine 902.

Belongs to the SecA family. As to quaternary structure, monomer and homodimer. Part of the essential Sec protein translocation apparatus which comprises SecA, SecYEG and auxiliary proteins SecDF-YajC and YidC. The cofactor is Zn(2+).

It is found in the cell inner membrane. It localises to the cytoplasm. It catalyses the reaction ATP + H2O + cellular proteinSide 1 = ADP + phosphate + cellular proteinSide 2.. Its function is as follows. Part of the Sec protein translocase complex. Interacts with the SecYEG preprotein conducting channel. Has a central role in coupling the hydrolysis of ATP to the transfer of proteins into and across the cell membrane, serving both as a receptor for the preprotein-SecB complex and as an ATP-driven molecular motor driving the stepwise translocation of polypeptide chains across the membrane. This Rickettsia felis (strain ATCC VR-1525 / URRWXCal2) (Rickettsia azadi) protein is Protein translocase subunit SecA.